Here is a 226-residue protein sequence, read N- to C-terminus: 7-cyano-7-deazaguanine synthase (226 aa).

10 to 20 (LSGGLDSATAA) provides a ligand contact to ATP. Zn(2+)-binding residues include cysteine 191, cysteine 199, cysteine 202, and cysteine 205.

This sequence belongs to the QueC family. Zn(2+) is required as a cofactor.

The catalysed reaction is 7-carboxy-7-deazaguanine + NH4(+) + ATP = 7-cyano-7-deazaguanine + ADP + phosphate + H2O + H(+). The protein operates within purine metabolism; 7-cyano-7-deazaguanine biosynthesis. Functionally, catalyzes the ATP-dependent conversion of 7-carboxy-7-deazaguanine (CDG) to 7-cyano-7-deazaguanine (preQ(0)). The sequence is that of 7-cyano-7-deazaguanine synthase from Synechococcus sp. (strain CC9311).